The chain runs to 215 residues: 3-demethoxyubiquinol 3-hydroxylase (215 aa).

Positions 64, 94, 97, 146, 178, and 181 each coordinate Fe cation.

Belongs to the COQ7 family. The cofactor is Fe cation.

Its subcellular location is the cell membrane. The catalysed reaction is a 5-methoxy-2-methyl-3-(all-trans-polyprenyl)benzene-1,4-diol + AH2 + O2 = a 3-demethylubiquinol + A + H2O. It functions in the pathway cofactor biosynthesis; ubiquinone biosynthesis. In terms of biological role, catalyzes the hydroxylation of 2-nonaprenyl-3-methyl-6-methoxy-1,4-benzoquinol during ubiquinone biosynthesis. The chain is 3-demethoxyubiquinol 3-hydroxylase from Pseudomonas paraeruginosa (strain DSM 24068 / PA7) (Pseudomonas aeruginosa (strain PA7)).